A 325-amino-acid chain; its full sequence is Olfactory receptor 1S2 (325 aa).

Residues 1 to 38 (MKTLCSFLQISRNMHQENQTTITEFILLGLSNQAEHQN) are Extracellular-facing. Residue N18 is glycosylated (N-linked (GlcNAc...) asparagine). A helical membrane pass occupies residues 39–62 (LLFVLFLSMYVVTVVGNGLIIVAI). Topologically, residues 63–70 (SLDIYLHT) are cytoplasmic. A helical transmembrane segment spans residues 71–92 (PMYLFLAYLSFADISSISNSVP). Over 93–113 (KMLVNIQTNSQSISYESCITQ) the chain is Extracellular. A disulfide bond links C110 and C202. A helical membrane pass occupies residues 114–133 (MYFSIVFVVTDNLLLGTMAF). The Cytoplasmic portion of the chain corresponds to 134–152 (DHFVAICHPLNYTTFMRAR). Residues 153–171 (FGTLLTVISWFLSNIIALT) form a helical membrane-spanning segment. The Extracellular segment spans residues 172–208 (HTLLLIQLLFCDHNTLPHFFCDLAPLLKLSCSDTMIN). The helical transmembrane segment at 209 to 232 (ELVLFIVGLSVIIFPFVLIFFSYV) threads the bilayer. At 233-249 (CIIRAVLGVSSTQGKWK) the chain is on the cytoplasmic side. Residues 250 to 272 (AFSTCGSHLTIALLFYGTTVGVY) traverse the membrane as a helical segment. Topologically, residues 273-285 (FFPSSTHPEDTDK) are extracellular. The chain crosses the membrane as a helical span at residues 286 to 305 (IGAVLFTVVTPMMNPFIYSL). The Cytoplasmic segment spans residues 306–325 (RNKDMKGALRKLINRKISSL).

Belongs to the G-protein coupled receptor 1 family.

The protein resides in the cell membrane. Functionally, odorant receptor. This is Olfactory receptor 1S2 (OR1S2) from Homo sapiens (Human).